A 289-amino-acid polypeptide reads, in one-letter code: Thiosulfate sulfurtransferase (289 aa).

The Rhodanese 1 domain maps to 24-142 (VGAGLRVLDA…WVKEGHPVTA (119 aa)). The segment at 143–158 (EPSQPAEAVFKAKLDK) is hinge. The 113-residue stretch at 172–284 (GSKKFQVVDS…WFHRAPPQYK (113 aa)) folds into the Rhodanese 2 domain. Arginine 186 lines the substrate pocket. The active-site Cysteine persulfide intermediate is the cysteine 244. Lysine 246 contacts substrate.

Monomer. In terms of tissue distribution, expressed in numerous tissues.

It is found in the mitochondrion matrix. The enzyme catalyses thiosulfate + hydrogen cyanide = thiocyanate + sulfite + 2 H(+). In terms of biological role, together with MRPL18, acts as a mitochondrial import factor for the cytosolic 5S rRNA. Only the nascent unfolded cytoplasmic form is able to bind to the 5S rRNA. Formation of iron-sulfur complexes and cyanide detoxification. The chain is Thiosulfate sulfurtransferase (TST) from Gallus gallus (Chicken).